The chain runs to 444 residues: C4-dicarboxylate transport protein (444 aa).

A run of 8 helical transmembrane segments spans residues His-19–Pro-39, Leu-55–Met-75, Ile-90–Leu-110, Ile-161–Leu-181, Leu-199–Ile-219, Leu-230–Gly-250, Leu-343–Ile-363, and Ala-366–Ile-386.

The protein belongs to the dicarboxylate/amino acid:cation symporter (DAACS) (TC 2.A.23) family.

It localises to the cell inner membrane. Responsible for the transport of dicarboxylates such as succinate, fumarate, and malate from the periplasm across the membrane. The polypeptide is C4-dicarboxylate transport protein (Allorhizobium ampelinum (strain ATCC BAA-846 / DSM 112012 / S4) (Agrobacterium vitis (strain S4))).